Consider the following 967-residue polypeptide: MTFAVGQRWMSESENNLGLGLIVAIDRRTVTILFPASEEQRIYALNSAPLTRVLFQIGDEIAHHEGWKGNVLDILENNGVAFYLLKRQDNGEEITIQERDIAHQMTFSKPQDRLFTTQIDRNEHFTLRYQALTHQQAQFQSPLRGLRGIRAGLIPHQLHIAREVGQRTAPRVLLADEVGLGKTIEAGMILQQQLFAEKVERVLIIVPETLQHQWLVEMLRRFNLHFALFDEERCADFEDPASALWINPFNTESQIICALDWLCEKPKRVEQLLEAGFDMLIVDEAHHLGWSEHNPSLEYQLVEQLARQIPAVLLLTATPEQLGQESHFARLSLLDPDRFYDYQAFVQEQQQYQPVAEAVQSLLADKPLSAVEKNHISDLLSEQDVEPLLKVLDSQAHDEQKALARQELIDNLIDRHGTSRVLFRNTRQGVKGFPHRTYNQITLELPKQYNNAANVLAMLGEKGDNDSFYPEQMFQKLNPDARWWEFDPRLEWLITFLKNHREEKVLVICRHANTAIQLEQALREKEAIRAAVFHEKLSIVERDRAAAYFAQQEDGAQLLLSSSIGSEGRNFQFASHLVLFNLPDDPDLLEQCIGRLDRIGQRRDIQIHVPCFADTAQVVLARWYHEGLNAFEETCPMGMTLFEAHQTQLNKFLQNPTALEGFAEFVSLTRKQQHELKQALEKGRDRLLELNSNGGEQAQQLATDIAEQDGTTELVNFTLNLFDIIGVDQEDLGEKSIVITLASNMLVPDFPGLKEEGATVTFDRQLSLAREDVEFISWDHPLIRHGIDLITSGDIGKSAVSLLINKALPAGTLLLEMIYVVEAQAPKGLQLTRFLPPTPIRLLLDQKGNNLAEQVSFSALQKQLKPIGKNMANKVVKMVRPNIEQLVKLSEQKIVAQAQQIIHNAQQLADQTLSAELNRLTALQAVNKNIRQDEVDALDNIRSQSLAQLQQATWRLDSLRVIVSNKE.

The 175-residue stretch at 163–337 (EVGQRTAPRV…FARLSLLDPD (175 aa)) folds into the Helicase ATP-binding domain. 176-183 (DEVGLGKT) is an ATP binding site. A DEAH box motif is present at residues 283 to 286 (DEAH). A Helicase C-terminal domain is found at 489–660 (RLEWLITFLK…KFLQNPTALE (172 aa)).

It belongs to the SNF2/RAD54 helicase family. RapA subfamily. Interacts with the RNAP. Has a higher affinity for the core RNAP than for the holoenzyme. Its ATPase activity is stimulated by binding to RNAP.

Transcription regulator that activates transcription by stimulating RNA polymerase (RNAP) recycling in case of stress conditions such as supercoiled DNA or high salt concentrations. Probably acts by releasing the RNAP, when it is trapped or immobilized on tightly supercoiled DNA. Does not activate transcription on linear DNA. Probably not involved in DNA repair. The chain is RNA polymerase-associated protein RapA from Pasteurella multocida (strain Pm70).